The sequence spans 220 residues: N-(5'-phosphoribosyl)anthranilate isomerase (220 aa).

Belongs to the TrpF family.

The enzyme catalyses N-(5-phospho-beta-D-ribosyl)anthranilate = 1-(2-carboxyphenylamino)-1-deoxy-D-ribulose 5-phosphate. Its pathway is amino-acid biosynthesis; L-tryptophan biosynthesis; L-tryptophan from chorismate: step 3/5. The polypeptide is N-(5'-phosphoribosyl)anthranilate isomerase (Xylella fastidiosa (strain M12)).